The sequence spans 451 residues: Transcription factor TGAL8 (451 aa).

Over residues 1 to 22 the composition is skewed to polar residues; the sequence is MAYPSTSGMIQASSSLHGSITR. 2 disordered regions span residues 1–32 and 70–151; these read MAYP…DMPS and FPSQ…PKTL. Positions 141 to 150 are enriched in basic and acidic residues; it reads KGPKTPDPKT. One can recognise a bZIP domain in the interval 147–191; sequence DPKTLRRLAQNREAARKSRLRKKAYIQQLETGRIRLAHLEQEIQF. The interval 149 to 169 is basic motif; the sequence is KTLRRLAQNREAARKSRLRKK. The tract at residues 175–189 is leucine-zipper; the sequence is LETGRIRLAHLEQEI. Residues 208–444 enclose the DOG1 domain; the sequence is AALFNLEYER…RALALFWTTT (237 aa).

The protein belongs to the bZIP family. Interacts with NPR5/NH4, NH5.1 and NH5.2.

The protein localises to the nucleus. Functionally, transcriptional regulator involved in defense response. This Oryza sativa subsp. japonica (Rice) protein is Transcription factor TGAL8.